Consider the following 427-residue polypeptide: Trigger factor (427 aa).

In terms of domain architecture, PPIase FKBP-type spans 163-248; sequence GDTVVIDFVG…IHEVKAKEVP (86 aa).

It belongs to the FKBP-type PPIase family. Tig subfamily.

The protein localises to the cytoplasm. It carries out the reaction [protein]-peptidylproline (omega=180) = [protein]-peptidylproline (omega=0). Its function is as follows. Involved in protein export. Acts as a chaperone by maintaining the newly synthesized protein in an open conformation. Functions as a peptidyl-prolyl cis-trans isomerase. This Streptococcus pneumoniae (strain Taiwan19F-14) protein is Trigger factor.